The sequence spans 233 residues: Auxin-responsive protein IAA11 (233 aa).

Disordered stretches follow at residues 1–27 and 46–100; these read MAGLGFDETELRLGLPGAGELAARSSG and PAAV…PKAQ. Positions 11–15 match the EAR-like (transcriptional repression) motif; it reads LRLGL. A compositionally biased stretch (acidic residues) spans 54-63; the sequence is GAQEDKEDAD. The 96-residue stretch at 122–217 folds into the PB1 domain; it reads AALVKVSMDG…SCKRLRIMKG (96 aa).

The protein belongs to the Aux/IAA family. Homodimers and heterodimers. Highly expressed in etiolated shoots. Expressed in roots.

The protein resides in the nucleus. Aux/IAA proteins are short-lived transcriptional factors that function as repressors of early auxin response genes at low auxin concentrations. This Oryza sativa subsp. japonica (Rice) protein is Auxin-responsive protein IAA11 (IAA11).